The chain runs to 221 residues: Telomere repeats-binding bouquet formation protein 2 (221 aa).

Belongs to the TERB2 family. As to quaternary structure, component of the MAJIN-TERB1-TERB2 complex, composed of MAJIN, TERB1 and TERB2.

The protein localises to the chromosome. It localises to the telomere. It is found in the nucleus inner membrane. Functionally, meiosis-specific telomere-associated protein involved in meiotic telomere attachment to the nucleus inner membrane, a crucial step for homologous pairing and synapsis. Component of the MAJIN-TERB1-TERB2 complex, which promotes telomere cap exchange by mediating attachment of telomeric DNA to the inner nuclear membrane and replacement of the protective cap of telomeric chromosomes: in early meiosis, the MAJIN-TERB1-TERB2 complex associates with telomeric DNA and the shelterin/telosome complex. During prophase, the complex matures and promotes release of the shelterin/telosome complex from telomeric DNA. This chain is Telomere repeats-binding bouquet formation protein 2, found in Bos taurus (Bovine).